The sequence spans 590 residues: Monoterepene synthase TPS1, chloropastic (590 aa).

The transit peptide at 1-42 (MALNTFLHFPPCSLSSFSCAVPKLPLAIFHKTMARQIRCPRA) directs the protein to the chloroplast. Residues Arg304, Asp341, Asp345, Arg483, and Asp486 each contribute to the (2E)-geranyl diphosphate site. Mg(2+)-binding residues include Asp341 and Asp345. Positions 341-345 (DDMYD) match the DDXXD motif motif. Mg(2+)-binding residues include Asp486, Thr490, and Glu494.

This sequence belongs to the terpene synthase family. Tpsb subfamily. As to quaternary structure, monomer. Mg(2+) is required as a cofactor.

It is found in the plastid. Its subcellular location is the chloroplast. It catalyses the reaction (2E)-geranyl diphosphate = beta-thujene + diphosphate. The catalysed reaction is (2E)-geranyl diphosphate = sabinene + diphosphate. The enzyme catalyses (2E)-geranyl diphosphate = beta-pinene + diphosphate. It carries out the reaction (2E)-geranyl diphosphate = alpha-terpinene + diphosphate. It functions in the pathway secondary metabolite biosynthesis; terpenoid biosynthesis. Its function is as follows. Monoterpene synthase involved in the biosynthesis of volatile organic compounds. Mediates the conversion of (2E)-geranyl diphosphate (GPP) into beta-thujene, sabinene, beta-pinene and alpha-terpinene. Does not use (2E,6E)-farnesyl diphosphate (FPP) as substrate. This chain is Monoterepene synthase TPS1, chloropastic, found in Cananga odorata (Ylang-ylang tree).